We begin with the raw amino-acid sequence, 151 residues long: MSLSDADKKALDASWKKLTAGADGKKNAGINLVLWMFANVPNMRAQFSKFNANQSDDALKGDAEFIKQVNVIVAALDGLLQSVNNPGQLQANLDKLAKSHVNLKIGLEFFGPLQQNIHSFIESALGVGAGSDEPKAWGNLIAAFNETLKKA.

The region spanning 2 to 151 (SLSDADKKAL…AAFNETLKKA (150 aa)) is the Globin domain. H100 serves as a coordination point for heme b.

It belongs to the globin family.

In Biomphalaria glabrata (Bloodfluke planorb), this protein is Globin.